Here is a 1479-residue protein sequence, read N- to C-terminus: Type VII secretion system protein EssC (1479 aa).

At Met-1–Asn-229 the chain is on the cytoplasmic side. A helical transmembrane segment spans residues Thr-230–Val-252. Residues Arg-253–Gly-256 are Extracellular-facing. The chain crosses the membrane as a helical span at residues Ile-257–Ser-279. Residues Glu-280–Lys-1479 are Cytoplasmic-facing. FtsK domains are found at residues Asp-652 to Asn-846 and Gln-997 to Ser-1183. ATP is bound by residues Gly-672 to Ser-679 and Gly-1014 to Thr-1021.

The protein belongs to the EssC family. As to quaternary structure, homooligomer. Interacts with EsaE.

It localises to the cell membrane. Functionally, component of the type VII secretion system (Ess). Required for the secretion of substrates including EsxA and EsxB. However, unable to support secretion of the substrate protein EsxC. This is Type VII secretion system protein EssC from Staphylococcus aureus (strain Mu50 / ATCC 700699).